Reading from the N-terminus, the 233-residue chain is Probable RNA 2'-phosphotransferase (233 aa).

It belongs to the KptA/TPT1 family.

Functionally, removes the 2'-phosphate from RNA via an intermediate in which the phosphate is ADP-ribosylated by NAD followed by a presumed transesterification to release the RNA and generate ADP-ribose 1''-2''-cyclic phosphate (APPR&gt;P). May function as an ADP-ribosylase. This is Probable RNA 2'-phosphotransferase from Hyperthermus butylicus (strain DSM 5456 / JCM 9403 / PLM1-5).